A 339-amino-acid polypeptide reads, in one-letter code: WAT1-related protein At5g40210 (339 aa).

10 helical membrane-spanning segments follow: residues 11–31 (GWILTAMVVTEFSNVGVNTLV), 42–62 (FVVLVYSYTFGSLLLLPLTFF), 74–94 (FSILCNMGILGLIASAFQILG), 104–124 (TLSSAMSNVNPAFTFILAVVF), 140–160 (VLGTILSIIGALVVTLYHGPM), 168–188 (WIIGGGLLALQYILVSVSYLV), 200–220 (VVVTLVHNVCIAVVCAFVSLL), 233–253 (FDITLITVVATGILNSGYYVI), 266–286 (LSMFKPLSILIAAVSTFIFLG), and 289–309 (LYLGSVMGGILISIGFYMVLW). The 126-residue stretch at 29–154 (TLVKAATSKG…LSIIGALVVT (126 aa)) folds into the EamA domain.

The protein belongs to the drug/metabolite transporter (DMT) superfamily. Plant drug/metabolite exporter (P-DME) (TC 2.A.7.4) family.

It localises to the membrane. This is WAT1-related protein At5g40210 from Arabidopsis thaliana (Mouse-ear cress).